A 265-amino-acid polypeptide reads, in one-letter code: Tyrosine protein kinase-interacting protein (265 aa).

Positions 1 to 14 (MANEGEEIELTEFP) are enriched in acidic residues. Positions 1-49 (MANEGEEIELTEFPETEKERKDEEKLSSCSEETTDTSSSSSSDHVPAPI) are disordered. Residues 1 to 238 (MANEGEEIEL…LKRLENKVNA (238 aa)) lie on the Cytoplasmic side of the membrane. The span at 15 to 26 (ETEKERKDEEKL) shows a compositional bias: basic and acidic residues. The segment covering 27–43 (SSCSEETTDTSSSSSSD) has biased composition (low complexity). Position 123 is a phosphotyrosine; by host LCK (Tyr-123). Tyr-136 carries the post-translational modification Phosphotyrosine; by host. Positions 155–164 (EDLQSFLEKY) are CSKH/LBD2. A disordered region spans residues 172-192 (KRDLSATWDPGMPTPALPPRP). Positions 183-192 (MPTPALPPRP) are SH3B/LBD1. The span at 183 to 192 (MPTPALPPRP) shows a compositional bias: pro residues. Residues 225 to 234 (IVKDLKRLEN) are SH3 binding. The chain crosses the membrane as a helical span at residues 239-259 (IICLVVVILAVLLLVTVLSIL). The Extracellular segment spans residues 260–265 (HIGMKS).

In terms of assembly, binds host LCK, human WDR48 and human NXF1/TAP. Forms a complex with activated LCK and STAT1 and STAT3. Phosphorylation on Tyr-123 acts as a docking site for the recruitment of STATs 1 and 3.

It localises to the host cell membrane. Functionally, plays a critical role in virus induced T-cell transformation. Binds to T-cell-specific tyrosine kinase LCK SH2 and SH3 domains, thereby activating its kinase activity. Once phosphorylated by host LCK, forms a complex with at least STAT 1 and 3, resulting on the phosphorylation of STAT3 and presumably STAT1, and their migration into the nucleus to induce transcription of target genes. Stimulates host ILF3/NF-AT-90 activity. Association with host NXF1/TAP transduces the signal up-regulating surface expression of adhesion molecules as well as activating NF-kappa-B activity. Acts synergistically with StpC to stimulate NF-kappa-B activity and interleukin-2 gene expression. Activation of NF-kappa-B protects lymphocytes from apoptosis, thereby facilitating viral induced cell transformation. May cause down-regulation of host LCK and cell apoptosis when stably overexpressed ex vivo. Interaction with WDR48 induce degradation of T-cell receptor in a lysosome-dependent fashion, when both proteins are overexpressed. The biological effect of this interaction remains controversial since no T-cell receptor degradation is observed in infected cells. In Saimiriine herpesvirus 2 (strain 484) (SaHV-2), this protein is Tyrosine protein kinase-interacting protein.